Reading from the N-terminus, the 300-residue chain is Porphobilinogen deaminase (300 aa).

Cys239 carries the post-translational modification S-(dipyrrolylmethanemethyl)cysteine.

The protein belongs to the HMBS family. Monomer. Requires dipyrromethane as cofactor.

It carries out the reaction 4 porphobilinogen + H2O = hydroxymethylbilane + 4 NH4(+). Its pathway is porphyrin-containing compound metabolism; protoporphyrin-IX biosynthesis; coproporphyrinogen-III from 5-aminolevulinate: step 2/4. In terms of biological role, tetrapolymerization of the monopyrrole PBG into the hydroxymethylbilane pre-uroporphyrinogen in several discrete steps. In Francisella philomiragia subsp. philomiragia (strain ATCC 25017 / CCUG 19701 / FSC 153 / O#319-036), this protein is Porphobilinogen deaminase.